Consider the following 461-residue polypeptide: tRNA modification GTPase MnmE (461 aa).

Positions 20, 85, and 124 each coordinate (6S)-5-formyl-5,6,7,8-tetrahydrofolate. The TrmE-type G domain maps to 221 to 383; that stretch reads GIPVAIIGET…LQQLLTEVSS (163 aa). A K(+)-binding site is contributed by Asn231. Residues 231 to 236, 250 to 256, and 275 to 278 each bind GTP; these read NAGKST, SDIHGTT, and DTAG. Ser235 is a Mg(2+) binding site. 3 residues coordinate K(+): Ser250, Ile252, and Thr255. A Mg(2+)-binding site is contributed by Thr256. Position 461 (Lys461) interacts with (6S)-5-formyl-5,6,7,8-tetrahydrofolate.

This sequence belongs to the TRAFAC class TrmE-Era-EngA-EngB-Septin-like GTPase superfamily. TrmE GTPase family. Homodimer. Heterotetramer of two MnmE and two MnmG subunits. The cofactor is K(+).

Its subcellular location is the cytoplasm. In terms of biological role, exhibits a very high intrinsic GTPase hydrolysis rate. Involved in the addition of a carboxymethylaminomethyl (cmnm) group at the wobble position (U34) of certain tRNAs, forming tRNA-cmnm(5)s(2)U34. The chain is tRNA modification GTPase MnmE from Parabacteroides distasonis (strain ATCC 8503 / DSM 20701 / CIP 104284 / JCM 5825 / NCTC 11152).